The sequence spans 421 residues: Ankyrin repeat and SOCS box protein 6 (421 aa).

6 ANK repeats span residues 67-97, 102-131, 136-166, 170-205, 226-255, and 260-289; these read EGVSNALLKMAELGLTRAADVLLRHGANLNF, TYYTALHIAVLRNQPDMVELLVHHGADVNR, HESSPLDLASEEPERLPCLQRLLDLGADVNA, HGKTALLHALASSDGVQIHNTENIRLLLEGGADVKA, GGDKEEAQMINRFCFQVTRLLLAHGADPSE, and ESLTHICLKSFKLHFPLLRFLLESGAAYNC. In terms of domain architecture, SOCS box spans 360–415; sequence ALHFSLRQLESYPPPLKHLCRVAIRLYLQPWPVDVKVKALPLPDRLKWYLLSEHSG.

This sequence belongs to the ankyrin SOCS box (ASB) family. Binds APS. Identified in a complex with ELOB and ELOC. Interacts with CUL5 and RNF7. Interacts with SQSTM1. Post-translationally, ubiquitinated by RNF41; leading to proteasomal degradation.

The protein localises to the cytoplasm. It functions in the pathway protein modification; protein ubiquitination. Probable substrate-recognition component of a SCF-like ECS (Elongin-Cullin-SOCS-box protein) E3 ubiquitin-protein ligase complex which mediates the ubiquitination and subsequent proteasomal degradation of target proteins. May play a role in the regulation of cell proliferation and autophagy by promoting the ubiquitination and degradation of SQSTM1. The protein is Ankyrin repeat and SOCS box protein 6 (ASB6) of Homo sapiens (Human).